Consider the following 227-residue polypeptide: 7-cyano-7-deazaguanine synthase (227 aa).

7–17 (LSGGLDSSTIL) lines the ATP pocket. Cysteine 191, cysteine 199, cysteine 202, and cysteine 205 together coordinate Zn(2+).

This sequence belongs to the QueC family. It depends on Zn(2+) as a cofactor.

The catalysed reaction is 7-carboxy-7-deazaguanine + NH4(+) + ATP = 7-cyano-7-deazaguanine + ADP + phosphate + H2O + H(+). It participates in purine metabolism; 7-cyano-7-deazaguanine biosynthesis. Functionally, catalyzes the ATP-dependent conversion of 7-carboxy-7-deazaguanine (CDG) to 7-cyano-7-deazaguanine (preQ(0)). In Trichormus variabilis (strain ATCC 29413 / PCC 7937) (Anabaena variabilis), this protein is 7-cyano-7-deazaguanine synthase.